Reading from the N-terminus, the 202-residue chain is Holliday junction branch migration complex subunit RuvA (202 aa).

Residues 1–63 form a domain I region; it reads MIASLRGTVL…EDSMTLYGFT (63 aa). The interval 64 to 142 is domain II; that stretch reads SQDDRDMFHV…AFAPAESADL (79 aa). Residues 143–148 form a flexible linker region; the sequence is SSAAPA. A domain III region spans residues 149–202; the sequence is AAGPVVEDVVEALIGLGFTDKMARPVVESVVAEQPDAATPVVLRAALSQLGAKK.

It belongs to the RuvA family. Homotetramer. Forms an RuvA(8)-RuvB(12)-Holliday junction (HJ) complex. HJ DNA is sandwiched between 2 RuvA tetramers; dsDNA enters through RuvA and exits via RuvB. An RuvB hexamer assembles on each DNA strand where it exits the tetramer. Each RuvB hexamer is contacted by two RuvA subunits (via domain III) on 2 adjacent RuvB subunits; this complex drives branch migration. In the full resolvosome a probable DNA-RuvA(4)-RuvB(12)-RuvC(2) complex forms which resolves the HJ.

It localises to the cytoplasm. In terms of biological role, the RuvA-RuvB-RuvC complex processes Holliday junction (HJ) DNA during genetic recombination and DNA repair, while the RuvA-RuvB complex plays an important role in the rescue of blocked DNA replication forks via replication fork reversal (RFR). RuvA specifically binds to HJ cruciform DNA, conferring on it an open structure. The RuvB hexamer acts as an ATP-dependent pump, pulling dsDNA into and through the RuvAB complex. HJ branch migration allows RuvC to scan DNA until it finds its consensus sequence, where it cleaves and resolves the cruciform DNA. In Corynebacterium aurimucosum (strain ATCC 700975 / DSM 44827 / CIP 107346 / CN-1) (Corynebacterium nigricans), this protein is Holliday junction branch migration complex subunit RuvA.